We begin with the raw amino-acid sequence, 799 residues long: ATP synthase subunit alpha (799 aa).

The interval 1–549 is ATP synthase alpha chain; it reads MTDNKNHSLI…EEVSLKPTTE (549 aa). Residue 170 to 177 coordinates ATP; the sequence is GDRQTGKT. The interval 550 to 799 is unknown; sequence TSEAVQIEEK…KGPSGFTYLK (250 aa).

It belongs to the ATPase alpha/beta chains family. As to quaternary structure, F-type ATPases have 2 components, CF(1) - the catalytic core - and CF(0) - the membrane proton channel. CF(1) has five subunits: alpha(3), beta(3), gamma(1), delta(1), epsilon(1). CF(0) has three main subunits: a(1), b(2) and c(9-12). The alpha and beta chains form an alternating ring which encloses part of the gamma chain. CF(1) is attached to CF(0) by a central stalk formed by the gamma and epsilon chains, while a peripheral stalk is formed by the delta and b chains.

The protein resides in the cell membrane. It catalyses the reaction ATP + H2O + 4 H(+)(in) = ADP + phosphate + 5 H(+)(out). Its function is as follows. Produces ATP from ADP in the presence of a proton gradient across the membrane. The alpha chain is a regulatory subunit. This is ATP synthase subunit alpha (atpA) from Ureaplasma parvum serovar 3 (strain ATCC 27815 / 27 / NCTC 11736).